Here is a 98-residue protein sequence, read N- to C-terminus: Feather keratin 3 (98 aa).

Belongs to the avian keratin family. As to quaternary structure, the avian keratins (F-ker, S-ker, C-ker and B-ker) are a complex mixture of very similar polypeptides.

This is Feather keratin 3 from Gallus gallus (Chicken).